A 529-amino-acid polypeptide reads, in one-letter code: Endoglucanase 21 (529 aa).

The signal sequence occupies residues 1 to 24 (MVAAMTMCAAVAVLLVLTSTMAAA). D89 functions as the Nucleophile in the catalytic mechanism. The N-linked (GlcNAc...) asparagine glycan is linked to N342. Residues H429, D481, and E490 contribute to the active site.

The protein belongs to the glycosyl hydrolase 9 (cellulase E) family. Expressed in roots and flowers.

The protein resides in the secreted. The enzyme catalyses Endohydrolysis of (1-&gt;4)-beta-D-glucosidic linkages in cellulose, lichenin and cereal beta-D-glucans.. This chain is Endoglucanase 21 (GLU9), found in Oryza sativa subsp. japonica (Rice).